The sequence spans 321 residues: Acyl-CoA 5-desaturase AL21 (321 aa).

2 helical membrane passes run 42 to 62 and 64 to 84; these read IFHIILVGGLHVLCLSAPFTF and WSAFWLSLTLYAVCGVFGTTL. Residues His87, His92, His124, His127, and His128 each contribute to the Fe cation site. A Histidine box-1 motif is present at residues 87-92; that stretch reads HRNLTH. Residues 124 to 128 carry the Histidine box-2 motif; it reads HRYHH. The helical transmembrane segment at 190–210 threads the bilayer; that stretch reads LQAALLYMFGGFPFIVWGMAV. Residues His227, His256, His259, and His260 each coordinate Fe cation. Positions 256-260 match the Histidine box-3 motif; sequence HNNHH.

The protein belongs to the fatty acid desaturase type 1 family. The cofactor is Fe(2+).

It localises to the membrane. It carries out the reaction (11Z,14Z)-eicosadienoyl-CoA + AH2 + O2 = (5Z,11Z,14Z)-eicosatrienoyl-CoA + A + 2 H2O. The enzyme catalyses (11Z,14Z,17Z)-eicosatrienoyl-CoA + AH2 + O2 = (5Z,11Z,14Z,17Z)-eicosatetraenoyl-CoA + A + 2 H2O. It functions in the pathway lipid metabolism; polyunsaturated fatty acid biosynthesis. In terms of biological role, catalyzes the desaturation of 20:2Delta(11,14) and 20:3Delta(11,14,17) to generate sciadonic acid (20:3Delta(5,11,14)) and juniperonic acid (20:4Delta(5,11,14,17)). The enzyme can also use 16:0 and 18:0 as substrates. The polypeptide is Acyl-CoA 5-desaturase AL21 (Anemone leveillei (Windflower)).